We begin with the raw amino-acid sequence, 322 residues long: Glycerol-3-phosphate dehydrogenase [NAD(P)+] (322 aa).

NADPH contacts are provided by W13, H33, and K99. The sn-glycerol 3-phosphate site is built by K99, G127, and S129. A131 is a binding site for NADPH. 5 residues coordinate sn-glycerol 3-phosphate: K182, D235, S245, R246, and N247. The Proton acceptor role is filled by K182. R246 contributes to the NADPH binding site. E272 contributes to the NADPH binding site.

Belongs to the NAD-dependent glycerol-3-phosphate dehydrogenase family.

It localises to the cytoplasm. It catalyses the reaction sn-glycerol 3-phosphate + NAD(+) = dihydroxyacetone phosphate + NADH + H(+). It carries out the reaction sn-glycerol 3-phosphate + NADP(+) = dihydroxyacetone phosphate + NADPH + H(+). The protein operates within membrane lipid metabolism; glycerophospholipid metabolism. Functionally, catalyzes the reduction of the glycolytic intermediate dihydroxyacetone phosphate (DHAP) to sn-glycerol 3-phosphate (G3P), the key precursor for phospholipid synthesis. The chain is Glycerol-3-phosphate dehydrogenase [NAD(P)+] from Ruthia magnifica subsp. Calyptogena magnifica.